The chain runs to 359 residues: Glucose 1-dehydrogenase (359 aa).

A Zn(2+)-binding site is contributed by C39. T41 is a substrate binding site. 2 residues coordinate Zn(2+): H64 and E65. Residues E116 and E152 each contribute to the substrate site. E152 contacts Zn(2+). An NADP(+)-binding site is contributed by 183-186 (AGPI).

The protein belongs to the zinc-containing alcohol dehydrogenase family. Glucose 1-dehydrogenase subfamily. Requires Zn(2+) as cofactor.

The catalysed reaction is D-glucose + NAD(+) = D-glucono-1,5-lactone + NADH + H(+). The enzyme catalyses D-glucose + NADP(+) = D-glucono-1,5-lactone + NADPH + H(+). Its function is as follows. Catalyzes the NAD(P)(+)-dependent oxidation of D-glucose to D-gluconate via gluconolactone. Can utilize both NAD(+) and NADP(+) as electron acceptor. Is involved in the degradation of glucose through a non-phosphorylative variant of the Entner-Doudoroff pathway. The protein is Glucose 1-dehydrogenase of Methanocella arvoryzae (strain DSM 22066 / NBRC 105507 / MRE50).